The chain runs to 668 residues: MAMPRATSGPAYPERFYAAASYVGLDGSDSSAKNVISKFPDDTALLLYALYQQATVGPCNTPKPSAWRPVEQSKWKSWQGLGTMPSIEAMRLFVKILEEDDPGWYSRASNDIPDPVVDVQINRAKDEPVVENGSTFSETKTISTENGRLAETQDKDVVSEDSNTVSVYNQWTAPQTSGQRPKARYEHGAAVIQDKMYIYGGNHNGRYLGDLHVLDLKSWTWSRVETKVATESQETSTPTLLAPCAGHSLIAWDNKLLSIGGHTKDPSESMQVKVFDPHTITWSMLKTYGKPPVSRGGQSVTMVGKTLVIFGGQDAKRSLLNDLHILDLDTMTWDEIDAVGVSPSPRSDHAAAVHAERFLLIFGGGSHATCFDDLHVLDLQTMEWSRPAQQGDAPTPRAGHAGVTIGENWFIVGGGDNKSGASESVVLNMSTLAWSVVASVQGRVPLASEGLSLVVSSYNGEDVLVAFGGYNGRYNNEINLLKPSHKSTLQTKTLEAPLPGSLSAVNNATTRDIESEVEVSQEGRVREIVMDNVNPGSKVEGNSERIIATIKSEKEELEASLNKERMQTLQLRQELGEAELRNTDLYKELQSVRGQLAAEQSRCFKLEVDVAELRQKLQTLETLQKELELLQRQKAASEQAAMNAKRQGSGGVWGWLAGSPQEKDDDSP.

The ACB domain maps to 12 to 106 (YPERFYAAAS…LEEDDPGWYS (95 aa)). An acyl-CoA contacts are provided by residues K33, 48–52 (YALYQ), and K74. 6 Kelch repeats span residues 195–242 (KMYI…TLLA), 255–305 (KLLS…MVGK), 307–356 (LVIF…VHAE), 358–407 (FLLI…TIGE), 408–456 (NWFI…LVVS), and 463–508 (VLVA…VNNA). S515 and S520 each carry phosphoserine. Positions 538–647 (KVEGNSERII…EQAAMNAKRQ (110 aa)) form a coiled coil. The disordered stretch occupies residues 639-668 (QAAMNAKRQGSGGVWGWLAGSPQEKDDDSP).

This sequence belongs to the ACBP family. As to quaternary structure, interacts with RAP2-3/EBP, an ethylene-responsive element binding protein. As to expression, mostly expressed in roots, stems, and leaves, and, to a lower extent, in flowers and siliques.

It is found in the cytoplasm. Its function is as follows. Binds medium- and long-chain acyl-CoA esters with very high affinity. Can interact in vitro with oleoyl-CoA, barely with palmitoyl-CoA, but not with arachidonyl-CoA. May function as an intracellular carrier of acyl-CoA esters. Plays a role in the biosynthesis of membrane lipids including galactolipids and phospholipids. This chain is Acyl-CoA-binding domain-containing protein 4 (ACBP4), found in Arabidopsis thaliana (Mouse-ear cress).